We begin with the raw amino-acid sequence, 35 residues long: Cytochrome b6-f complex subunit 5 (35 aa).

A helical transmembrane segment spans residues 5–25; it reads LLCGIVLGLIPVTLTGLFVAA.

Belongs to the PetG family. In terms of assembly, the 4 large subunits of the cytochrome b6-f complex are cytochrome b6, subunit IV (17 kDa polypeptide, PetD), cytochrome f and the Rieske protein, while the 4 small subunits are PetG, PetL, PetM and PetN. The complex functions as a dimer.

The protein resides in the plastid. It is found in the organellar chromatophore thylakoid membrane. Its function is as follows. Component of the cytochrome b6-f complex, which mediates electron transfer between photosystem II (PSII) and photosystem I (PSI), cyclic electron flow around PSI, and state transitions. PetG is required for either the stability or assembly of the cytochrome b6-f complex. The chain is Cytochrome b6-f complex subunit 5 from Paulinella chromatophora.